The primary structure comprises 103 residues: Large ribosomal subunit protein bL21 (103 aa).

Belongs to the bacterial ribosomal protein bL21 family. Part of the 50S ribosomal subunit. Contacts protein L20.

Its function is as follows. This protein binds to 23S rRNA in the presence of protein L20. The sequence is that of Large ribosomal subunit protein bL21 from Teredinibacter turnerae (strain ATCC 39867 / T7901).